An 84-amino-acid polypeptide reads, in one-letter code: UPF0410 protein YmgE (84 aa).

The next 3 helical transmembrane spans lie at 1–21, 27–47, and 58–78; these read MGII…KLIM, GGFF…GWLA, and GFNL…LGIF.

Belongs to the UPF0410 family.

It localises to the cell inner membrane. The chain is UPF0410 protein YmgE (ymgE) from Escherichia coli (strain K12).